A 150-amino-acid chain; its full sequence is Large ribosomal subunit protein bL9 (150 aa).

The protein belongs to the bacterial ribosomal protein bL9 family.

In terms of biological role, binds to the 23S rRNA. The sequence is that of Large ribosomal subunit protein bL9 from Shewanella baltica (strain OS155 / ATCC BAA-1091).